A 506-amino-acid polypeptide reads, in one-letter code: MKEYWTSLASLLGVLAFCQSLMNSVFPPELRFAISKLFNKFFKLFSTFCYFDITEIDGVNTNELYNAVQLYLSSSVSIAGNRLSLTRAVNSSSVTFGLSNNDSIVDTFNSVTVVWEHIVTQRQTQTFAWRPMPEEKRGFTLRIKKKDKNLILDSYLDYIMEKANEIRRLNQDRLLYTNSRGGSLDSRGLPWESVPFKHPSTFDTLAMDPVKKQQIMEDLKDFAECQSFYERTGRAWKRGYLLYGPPGTGKSSMIAAMANYLRYDIYDLELTEVKSNSELRKLLMKTSSKSIIVIEDIDCSINLTNRNKKQSTGSYNEPEMLTGSGLGDDLGDGNTITLSGLLNFTDGLWSCCGSERIFVFTTNHIEKLDPALLRSGRMDMHIHMSYCTFSSVKILLRNYLGFEEGDLNDVVLKELAEVVDRAEITPADVSEALIKNRRDKERAVRELLVDLRSRVERNEKNGKSRVQNVSLEEQENRAFDSLYAEENGGEEEEIEDNICKSSDDCS.

Residues 1-20 (MKEYWTSLASLLGVLAFCQS) form the signal peptide. 244–251 (GPPGTGKS) serves as a coordination point for ATP. Positions 462-506 (GKSRVQNVSLEEQENRAFDSLYAEENGGEEEEIEDNICKSSDDCS) are disordered. Positions 487 to 496 (NGGEEEEIED) are enriched in acidic residues. Over residues 497 to 506 (NICKSSDDCS) the composition is skewed to basic and acidic residues.

The protein belongs to the AAA ATPase family. BCS1 subfamily. Requires Mg(2+) as cofactor.

The catalysed reaction is ATP + H2O = ADP + phosphate + H(+). This Arabidopsis thaliana (Mouse-ear cress) protein is AAA-ATPase At4g25835.